The chain runs to 945 residues: Isoleucine--tRNA ligase (945 aa).

The short motif at 66–76 (PYANGDIHLGH) is the 'HIGH' region element. E581 contributes to the L-isoleucyl-5'-AMP binding site. The 'KMSKS' region signature appears at 622-626 (KMSKS). K625 serves as a coordination point for ATP. Zn(2+) contacts are provided by C908, C911, C928, and C931.

Belongs to the class-I aminoacyl-tRNA synthetase family. IleS type 1 subfamily. Monomer. It depends on Zn(2+) as a cofactor.

Its subcellular location is the cytoplasm. It carries out the reaction tRNA(Ile) + L-isoleucine + ATP = L-isoleucyl-tRNA(Ile) + AMP + diphosphate. Its function is as follows. Catalyzes the attachment of isoleucine to tRNA(Ile). As IleRS can inadvertently accommodate and process structurally similar amino acids such as valine, to avoid such errors it has two additional distinct tRNA(Ile)-dependent editing activities. One activity is designated as 'pretransfer' editing and involves the hydrolysis of activated Val-AMP. The other activity is designated 'posttransfer' editing and involves deacylation of mischarged Val-tRNA(Ile). This is Isoleucine--tRNA ligase from Burkholderia orbicola (strain MC0-3).